Consider the following 395-residue polypeptide: Elongation factor Tu (395 aa).

The tr-type G domain maps to 10 to 205 (KVHMNVGTIG…TMDEYFKDPV (196 aa)). Residues 19 to 26 (GHVDHGKT) form a G1 region. 19 to 26 (GHVDHGKT) is a binding site for GTP. Residue Thr-26 participates in Mg(2+) binding. The tract at residues 60-64 (GITIN) is G2. The interval 81-84 (DCPG) is G3. GTP is bound by residues 81-85 (DCPGH) and 136-139 (NKVD). The G4 stretch occupies residues 136-139 (NKVD). Residues 173–175 (SAF) are G5.

The protein belongs to the TRAFAC class translation factor GTPase superfamily. Classic translation factor GTPase family. EF-Tu/EF-1A subfamily. In terms of assembly, monomer.

Its subcellular location is the cytoplasm. The enzyme catalyses GTP + H2O = GDP + phosphate + H(+). Functionally, GTP hydrolase that promotes the GTP-dependent binding of aminoacyl-tRNA to the A-site of ribosomes during protein biosynthesis. This is Elongation factor Tu from Treponema denticola (strain ATCC 35405 / DSM 14222 / CIP 103919 / JCM 8153 / KCTC 15104).